The chain runs to 171 residues: Probable DNA-directed RNA polymerase subunit delta (171 aa).

The 68-residue stretch at 14-81 folds into the HTH HARE-type domain; it reads MALVEIAYEI…SDQTWGLRSW (68 aa). The segment at 138 to 171 is disordered; sequence EFDEIDEADDDELDDLEDEILDDDEDFDEEEDEE.

Belongs to the RpoE family. In terms of assembly, RNAP is composed of a core of 2 alpha, a beta and a beta' subunits. The core is associated with a delta subunit and one of several sigma factors.

Functionally, participates in both the initiation and recycling phases of transcription. In the presence of the delta subunit, RNAP displays an increased specificity of transcription, a decreased affinity for nucleic acids, and an increased efficiency of RNA synthesis because of enhanced recycling. The polypeptide is Probable DNA-directed RNA polymerase subunit delta (Bacillus licheniformis (strain ATCC 14580 / DSM 13 / JCM 2505 / CCUG 7422 / NBRC 12200 / NCIMB 9375 / NCTC 10341 / NRRL NRS-1264 / Gibson 46)).